The primary structure comprises 335 residues: 3-ketodihydrosphingosine reductase TSC10 (335 aa).

NADPH contacts are provided by Gly42, Ser44, Ser45, Gly46, Arg67, Asp68, Lys71, Asp95, and Leu96. Residues Gly42–Gly46 carry the GXSXG motif. The interval Leu141–Glu207 is involved in homodimer formation. The Proton acceptor role is filled by Tyr190. Residues Tyr190, Lys194, and Ile223 each coordinate NADP(+). The Lowers pKa of active site Tyr role is filled by Lys194. A helical transmembrane segment spans residues Thr288 to Trp308.

It belongs to the short-chain dehydrogenases/reductases (SDR) family. As to quaternary structure, homodimer; a minor portion forms homotetramers.

It is found in the endoplasmic reticulum membrane. The enzyme catalyses sphinganine + NADP(+) = 3-oxosphinganine + NADPH + H(+). Its pathway is lipid metabolism; sphingolipid metabolism. Its function is as follows. Catalyzes the reduction of 3'-oxosphinganine (3-ketodihydrosphingosine/KDS) to sphinganine (dihydrosphingosine/DHS), the second step of de novo sphingolipid biosynthesis. This Cryptococcus neoformans var. neoformans serotype D (strain JEC21 / ATCC MYA-565) (Filobasidiella neoformans) protein is 3-ketodihydrosphingosine reductase TSC10 (TSC10).